A 68-amino-acid polypeptide reads, in one-letter code: Large ribosomal subunit protein bL32 (68 aa).

Residues 1 to 24 form a disordered region; it reads MAVPQNRVTRSRRNMRRSHDALVA.

The protein belongs to the bacterial ribosomal protein bL32 family.

This chain is Large ribosomal subunit protein bL32, found in Paracoccus denitrificans (strain Pd 1222).